We begin with the raw amino-acid sequence, 141 residues long: Hemoglobin subunit alpha (141 aa).

In terms of domain architecture, Globin spans Val1–Arg141. Ser3 is subject to Phosphoserine. Lys7 bears the N6-succinyllysine mark. Position 8 is a phosphothreonine (Thr8). Residue Lys11 is modified to N6-succinyllysine. Lys16 is subject to N6-acetyllysine; alternate. Lys16 carries the post-translational modification N6-succinyllysine; alternate. Residue Tyr24 is modified to Phosphotyrosine. Ser35 bears the Phosphoserine mark. Lys40 carries the N6-succinyllysine modification. Ser49 is modified (phosphoserine). O2 is bound at residue His58. Position 87 (His87) interacts with heme b. Ser102 is subject to Phosphoserine. Position 108 is a phosphothreonine (Thr108). A phosphoserine mark is found at Ser124 and Ser131. Phosphothreonine occurs at positions 134 and 137. At Ser138 the chain carries Phosphoserine.

It belongs to the globin family. Heterotetramer of two alpha chains and two beta chains. In terms of tissue distribution, red blood cells.

Its function is as follows. Involved in oxygen transport from the lung to the various peripheral tissues. Functionally, hemopressin acts as an antagonist peptide of the cannabinoid receptor CNR1. Hemopressin-binding efficiently blocks cannabinoid receptor CNR1 and subsequent signaling. This Trichechus inunguis (Amazon manatee) protein is Hemoglobin subunit alpha (HBA).